We begin with the raw amino-acid sequence, 399 residues long: Elongation factor Tu (399 aa).

The region spanning 10-204 (KPHVNIGTIG…AVDASIPEPE (195 aa)) is the tr-type G domain. The segment at 19–26 (GHVDHGKT) is G1. 19 to 26 (GHVDHGKT) provides a ligand contact to GTP. Residue Thr-26 participates in Mg(2+) binding. Residues 60-64 (GITIN) are G2. Residues 81 to 84 (DCPG) are G3. Residues 81–85 (DCPGH) and 136–139 (NKCD) contribute to the GTP site. The tract at residues 136-139 (NKCD) is G4. Positions 174 to 176 (SGL) are G5.

This sequence belongs to the TRAFAC class translation factor GTPase superfamily. Classic translation factor GTPase family. EF-Tu/EF-1A subfamily. In terms of assembly, monomer.

It localises to the cytoplasm. It carries out the reaction GTP + H2O = GDP + phosphate + H(+). GTP hydrolase that promotes the GTP-dependent binding of aminoacyl-tRNA to the A-site of ribosomes during protein biosynthesis. The chain is Elongation factor Tu from Prochlorococcus marinus (strain AS9601).